A 207-amino-acid chain; its full sequence is Ribosomal RNA large subunit methyltransferase E (207 aa).

S-adenosyl-L-methionine is bound by residues glycine 60, tryptophan 62, aspartate 80, aspartate 96, and aspartate 121. Residue lysine 161 is the Proton acceptor of the active site.

It belongs to the class I-like SAM-binding methyltransferase superfamily. RNA methyltransferase RlmE family.

Its subcellular location is the cytoplasm. It carries out the reaction uridine(2552) in 23S rRNA + S-adenosyl-L-methionine = 2'-O-methyluridine(2552) in 23S rRNA + S-adenosyl-L-homocysteine + H(+). In terms of biological role, specifically methylates the uridine in position 2552 of 23S rRNA at the 2'-O position of the ribose in the fully assembled 50S ribosomal subunit. This is Ribosomal RNA large subunit methyltransferase E from Pseudomonas aeruginosa (strain UCBPP-PA14).